Here is a 307-residue protein sequence, read N- to C-terminus: 4-hydroxy-3-methylbut-2-enyl diphosphate reductase (307 aa).

Cysteine 13 serves as a coordination point for [4Fe-4S] cluster. Positions 42 and 75 each coordinate (2E)-4-hydroxy-3-methylbut-2-enyl diphosphate. The dimethylallyl diphosphate site is built by histidine 42 and histidine 75. Residues histidine 42 and histidine 75 each contribute to the isopentenyl diphosphate site. Cysteine 97 is a binding site for [4Fe-4S] cluster. Histidine 125 serves as a coordination point for (2E)-4-hydroxy-3-methylbut-2-enyl diphosphate. Histidine 125 serves as a coordination point for dimethylallyl diphosphate. Position 125 (histidine 125) interacts with isopentenyl diphosphate. Glutamate 127 serves as the catalytic Proton donor. A (2E)-4-hydroxy-3-methylbut-2-enyl diphosphate-binding site is contributed by threonine 165. Cysteine 195 serves as a coordination point for [4Fe-4S] cluster. The (2E)-4-hydroxy-3-methylbut-2-enyl diphosphate site is built by serine 223, serine 224, asparagine 225, and serine 267. Residues serine 223, serine 224, asparagine 225, and serine 267 each contribute to the dimethylallyl diphosphate site. Isopentenyl diphosphate is bound by residues serine 223, serine 224, asparagine 225, and serine 267.

The protein belongs to the IspH family. The cofactor is [4Fe-4S] cluster.

The catalysed reaction is isopentenyl diphosphate + 2 oxidized [2Fe-2S]-[ferredoxin] + H2O = (2E)-4-hydroxy-3-methylbut-2-enyl diphosphate + 2 reduced [2Fe-2S]-[ferredoxin] + 2 H(+). It carries out the reaction dimethylallyl diphosphate + 2 oxidized [2Fe-2S]-[ferredoxin] + H2O = (2E)-4-hydroxy-3-methylbut-2-enyl diphosphate + 2 reduced [2Fe-2S]-[ferredoxin] + 2 H(+). It functions in the pathway isoprenoid biosynthesis; dimethylallyl diphosphate biosynthesis; dimethylallyl diphosphate from (2E)-4-hydroxy-3-methylbutenyl diphosphate: step 1/1. Its pathway is isoprenoid biosynthesis; isopentenyl diphosphate biosynthesis via DXP pathway; isopentenyl diphosphate from 1-deoxy-D-xylulose 5-phosphate: step 6/6. In terms of biological role, catalyzes the conversion of 1-hydroxy-2-methyl-2-(E)-butenyl 4-diphosphate (HMBPP) into a mixture of isopentenyl diphosphate (IPP) and dimethylallyl diphosphate (DMAPP). Acts in the terminal step of the DOXP/MEP pathway for isoprenoid precursor biosynthesis. The sequence is that of 4-hydroxy-3-methylbut-2-enyl diphosphate reductase from Chlamydia trachomatis serovar L2b (strain UCH-1/proctitis).